A 381-amino-acid polypeptide reads, in one-letter code: Methanesulfonate monooxygenase (381 aa).

It belongs to the SsuD family.

It catalyses the reaction an alkanesulfonate + FMNH2 + O2 = an aldehyde + FMN + sulfite + H2O + 2 H(+). Catalyzes the desulfonation of aliphatic sulfonates. Shows highest activity with methanesulfonate. The chain is Methanesulfonate monooxygenase (msuD) from Pseudomonas aeruginosa (strain ATCC 15692 / DSM 22644 / CIP 104116 / JCM 14847 / LMG 12228 / 1C / PRS 101 / PAO1).